Reading from the N-terminus, the 809-residue chain is WASP homolog-associated protein with actin, membranes and microtubules (809 aa).

Residues 1-260 (MEDEQPDSLE…EVATLCKLDI (260 aa)) form a mediates association with membranes region. The mediates interaction with microtubules stretch occupies residues 261 to 630 (LKSLDEDDLG…FVPVGDQTHS (370 aa)). Coiled coils occupy residues 271-298 (PRRV…IQDI), 384-479 (ELEI…CAKR), and 512-542 (SIQM…LQRL). Disordered stretches follow at residues 506 to 528 (YSRQ…QKKK), 546 to 571 (KDKR…PSDL), 586 to 612 (IHPS…CQNC), and 627 to 707 (QTHS…FSCP). A compositionally biased stretch (basic and acidic residues) spans 515 to 528 (MKRDKIKEEEQKKK). At Ser606 the chain carries Phosphoserine. The interval 631 to 809 (KSSEELSLPP…DEQDPGQWDG (179 aa)) is mediates actin nucleation. Over residues 638 to 659 (LPPPPPPPPPPPPPPPPPPPPL) the composition is skewed to pro residues. A compositionally biased stretch (polar residues) spans 662–673 (LSSSSQAATHQN). WH2 domains follow at residues 709–727 (SMDE…LRKV) and 739–756 (INEH…LKKV). Residues 754 to 809 (KKVHPDLGPNPSSKPTSNRRTSDLERSIKAALQRIKRVSADSEEDSDEQDPGQWDG) form a disordered region. Over residues 763 to 772 (NPSSKPTSNR) the composition is skewed to polar residues. Residues 770-797 (SNRRTSDLERSIKAALQRIKRVSADSEE) are a coiled coil. The span at 794–803 (DSEEDSDEQD) shows a compositional bias: acidic residues. Ser795 bears the Phosphoserine mark.

In terms of assembly, interacts with ACTR3; indicative for an association with the ARP2/3 complex. Associates with microtubules; in vitro binds to tubulin heterodimer in a 1:1 stoichiometry; decorates microtubules with a repeat of 80 A along protofilaments. Interacts with RHOD (in GTP-bound form). In terms of tissue distribution, expressed in brain, lung, heart, colon and kidney (at protein level).

Its subcellular location is the cytoplasm. The protein resides in the endoplasmic reticulum-Golgi intermediate compartment. The protein localises to the cytoplasmic vesicle membrane. It localises to the golgi apparatus. It is found in the cis-Golgi network. In terms of biological role, acts as a nucleation-promoting factor (NPF) that stimulates Arp2/3-mediated actin polymerization both at the Golgi apparatus and along tubular membranes. Its activity in membrane tubulation requires F-actin and interaction with microtubules. Proposed to use coordinated actin-nucleating and microtubule-binding activities of distinct WHAMM molecules to drive membrane tubule elongation; when MT-bound can recruit and remodel membrane vesicles but is prevented to activate the Arp2/3 complex. Involved as a regulator of Golgi positioning and morphology. Participates in vesicle transport between the reticulum endoplasmic and the Golgi complex. Required for RhoD-dependent actin reorganization such as in cell adhesion and cell migration. The sequence is that of WASP homolog-associated protein with actin, membranes and microtubules (WHAMM) from Homo sapiens (Human).